Reading from the N-terminus, the 453-residue chain is Probable 1,4-beta-D-glucan cellobiohydrolase A (453 aa).

The first 17 residues, 1–17 (MYQRALLFSALATAVSA), serve as a signal peptide directing secretion. The Nucleophile role is filled by Glu-226. The Proton donor role is filled by Glu-231. Asn-284 is a glycosylation site (N-linked (GlcNAc...) asparagine).

Belongs to the glycosyl hydrolase 7 (cellulase C) family.

Its subcellular location is the secreted. It catalyses the reaction Hydrolysis of (1-&gt;4)-beta-D-glucosidic linkages in cellulose and cellotetraose, releasing cellobiose from the non-reducing ends of the chains.. The biological conversion of cellulose to glucose generally requires three types of hydrolytic enzymes: (1) Endoglucanases which cut internal beta-1,4-glucosidic bonds; (2) Exocellobiohydrolases that cut the disaccharide cellobiose from the non-reducing end of the cellulose polymer chain; (3) Beta-1,4-glucosidases which hydrolyze the cellobiose and other short cello-oligosaccharides to glucose. This is Probable 1,4-beta-D-glucan cellobiohydrolase A (cbhA) from Aspergillus clavatus (strain ATCC 1007 / CBS 513.65 / DSM 816 / NCTC 3887 / NRRL 1 / QM 1276 / 107).